A 537-amino-acid chain; its full sequence is Leucine-rich repeat LGI family member 4 (537 aa).

A signal peptide spans 1–19 (MGGAGILLLLLAGAGVVVA). 4 LRR repeats span residues 53-74 (TLLSLSLVRTGVTQLKAGSFLR), 77-98 (SLHLLLFTSNSFSVIEDDAFAG), 101-122 (HLQYLFIEDNEIGSISKNALRG), and 125-146 (SLTHLSLANNHLETLPRFLFRG). Positions 158-208 (NPFQCDCRVLWLLQWMPTVNASVGTGACAGPASLSHMQLHHLDPKTFKCRA) constitute an LRRCT domain. N177 carries N-linked (GlcNAc...) asparagine glycosylation. EAR repeat units follow at residues 210-252 (ELSW…SWDY), 256-298 (RFRP…ARPS), 302-349 (RLAP…CRDG), 351-394 (GFYP…HWTG), 396-439 (RFER…RWDG), 441-483 (MFRL…RLEP), and 487-532 (LLEP…QHHE).

Can bind to ADAM11, ADAM22 and ADAM23. As to expression, widely expressed, with highest expression in brain.

It localises to the secreted. Its function is as follows. Component of Schwann cell signaling pathway(s) that controls axon segregation and myelin formation. This is Leucine-rich repeat LGI family member 4 (LGI4) from Homo sapiens (Human).